We begin with the raw amino-acid sequence, 348 residues long: Putative [LysW]-L-2-aminoadipate/[LysW]-L-glutamate phosphate reductase (348 aa).

9-12 (SGYV) serves as a coordination point for NADP(+). Cys-149 is an active-site residue. An NADP(+)-binding site is contributed by Asn-315.

This sequence belongs to the NAGSA dehydrogenase family. Type 1 subfamily. LysY sub-subfamily.

The protein resides in the cytoplasm. It carries out the reaction [amino-group carrier protein]-C-terminal-N-(1-carboxy-5-oxopentan-1-yl)-L-glutamine + phosphate + NADP(+) = [amino-group carrier protein]-C-terminal-N-(1-carboxy-5-phosphooxy-5-oxopentan-1-yl)-L-glutamine + NADPH + H(+). The catalysed reaction is [amino-group carrier protein]-C-terminal-gamma-(L-glutamyl-5-semialdehyde)-L-glutamate + phosphate + NADP(+) = [amino-group carrier protein]-C-terminal-gamma-(5-phospho-L-glutamyl)-L-glutamate + NADPH + H(+). The protein operates within amino-acid biosynthesis; L-lysine biosynthesis via AAA pathway; L-lysine from L-alpha-aminoadipate (Thermus route): step 3/5. It functions in the pathway amino-acid biosynthesis; L-arginine biosynthesis. Involved in both the arginine and lysine biosynthetic pathways. This Cenarchaeum symbiosum (strain A) protein is Putative [LysW]-L-2-aminoadipate/[LysW]-L-glutamate phosphate reductase.